The sequence spans 321 residues: Probable membrane-associated kinase regulator 3 (321 aa).

Over residues 297-314 (KSNVTESELCSSRTSVST) the composition is skewed to polar residues. The interval 297–321 (KSNVTESELCSSRTSVSTCGDLDKD) is disordered.

It localises to the cell membrane. The polypeptide is Probable membrane-associated kinase regulator 3 (MAKR3) (Arabidopsis thaliana (Mouse-ear cress)).